The primary structure comprises 191 residues: Ribosomal RNA small subunit methyltransferase G (191 aa).

S-adenosyl-L-methionine-binding positions include Gly62, Leu67, 111–112 (IE), and Arg124.

The protein belongs to the methyltransferase superfamily. RNA methyltransferase RsmG family.

The protein localises to the cytoplasm. The enzyme catalyses guanosine(527) in 16S rRNA + S-adenosyl-L-methionine = N(7)-methylguanosine(527) in 16S rRNA + S-adenosyl-L-homocysteine. Its function is as follows. Specifically methylates the N7 position of guanine in position 527 of 16S rRNA. This Rickettsia rickettsii (strain Sheila Smith) protein is Ribosomal RNA small subunit methyltransferase G.